The following is an 885-amino-acid chain: Probable LRR receptor-like serine/threonine-protein kinase At1g51820 (885 aa).

The signal sequence occupies residues 1–20 (MERHFVFIATYLLIFHLVQA). Residues 21 to 509 (QNQTGFISVD…GHKKKSVIVP (489 aa)) are Extracellular-facing. Residues Asn-22, Asn-93, Asn-135, Asn-194, Asn-228, Asn-250, Asn-254, Asn-281, Asn-287, Asn-424, Asn-437, Asn-456, and Asn-461 are each glycosylated (N-linked (GlcNAc...) asparagine). LRR repeat units follow at residues 403–424 (IITS…AIKN), 427–447 (HLQI…EFLA), and 451–473 (SLLV…LLQK). A helical transmembrane segment spans residues 510–530 (VVASIASIAVLIGALVLFLIL). Residues 531-885 (RKKRSPKVEG…FGTEVSPNAR (355 aa)) lie on the Cytoplasmic side of the membrane. Positions 578–851 (NNFQRILGKG…QVVIELNECL (274 aa)) constitute a Protein kinase domain. Residues 584 to 592 (LGKGGFGMV) and Lys-606 each bind ATP. Tyr-651 carries the phosphotyrosine modification. Asp-703 (proton acceptor) is an active-site residue. The residue at position 737 (Ser-737) is a Phosphoserine. A phosphothreonine mark is found at Thr-738 and Thr-743. Tyr-751 is modified (phosphotyrosine).

The protein belongs to the protein kinase superfamily. Ser/Thr protein kinase family.

It is found in the membrane. It carries out the reaction L-seryl-[protein] + ATP = O-phospho-L-seryl-[protein] + ADP + H(+). It catalyses the reaction L-threonyl-[protein] + ATP = O-phospho-L-threonyl-[protein] + ADP + H(+). The sequence is that of Probable LRR receptor-like serine/threonine-protein kinase At1g51820 from Arabidopsis thaliana (Mouse-ear cress).